A 290-amino-acid polypeptide reads, in one-letter code: 33 kDa chaperonin (290 aa).

2 disulfides stabilise this stretch: cysteine 236–cysteine 238 and cysteine 269–cysteine 272.

This sequence belongs to the HSP33 family. In terms of processing, under oxidizing conditions two disulfide bonds are formed involving the reactive cysteines. Under reducing conditions zinc is bound to the reactive cysteines and the protein is inactive.

It localises to the cytoplasm. In terms of biological role, redox regulated molecular chaperone. Protects both thermally unfolding and oxidatively damaged proteins from irreversible aggregation. Plays an important role in the bacterial defense system toward oxidative stress. In Acholeplasma laidlawii (strain PG-8A), this protein is 33 kDa chaperonin.